The sequence spans 27 residues: Paragonial peptide PS-1 (27 aa).

Positions 1 to 17 are enriched in low complexity; it reads DVPSANANANNQRTAAA. The tract at residues 1–27 is disordered; it reads DVPSANANANNQRTAAAKPQANAEASS.

In terms of tissue distribution, main cells of the accessory glands of males (paragonial gland).

It is found in the secreted. Its function is as follows. Represses female sexual receptivity and stimulates oviposition. This peptide has a low activity. The sequence is that of Paragonial peptide PS-1 (PapC) from Drosophila funebris (Fruit fly).